Here is a 76-residue protein sequence, read N- to C-terminus: DNA-directed RNA polymerase subunit epsilon (76 aa).

Belongs to the RNA polymerase subunit epsilon family. RNAP is composed of a core of 2 alpha, a beta and a beta' subunit. The core is associated with a delta subunit, and at least one of epsilon or omega. When a sigma factor is associated with the core the holoenzyme is formed, which can initiate transcription.

The enzyme catalyses RNA(n) + a ribonucleoside 5'-triphosphate = RNA(n+1) + diphosphate. A non-essential component of RNA polymerase (RNAP). This Streptococcus pyogenes serotype M1 protein is DNA-directed RNA polymerase subunit epsilon.